Here is a 302-residue protein sequence, read N- to C-terminus: Sulfate adenylyltransferase subunit 2 (302 aa).

The tract at residues 279–302 is disordered; it reads ERQGRAIDHDSSGSMELKKRQGYF. The span at 280–302 shows a compositional bias: basic and acidic residues; that stretch reads RQGRAIDHDSSGSMELKKRQGYF.

Belongs to the PAPS reductase family. CysD subfamily. In terms of assembly, heterodimer composed of CysD, the smaller subunit, and CysN.

It carries out the reaction sulfate + ATP + H(+) = adenosine 5'-phosphosulfate + diphosphate. Its pathway is sulfur metabolism; hydrogen sulfide biosynthesis; sulfite from sulfate: step 1/3. Functionally, with CysN forms the ATP sulfurylase (ATPS) that catalyzes the adenylation of sulfate producing adenosine 5'-phosphosulfate (APS) and diphosphate, the first enzymatic step in sulfur assimilation pathway. APS synthesis involves the formation of a high-energy phosphoric-sulfuric acid anhydride bond driven by GTP hydrolysis by CysN coupled to ATP hydrolysis by CysD. In Aliivibrio fischeri (strain ATCC 700601 / ES114) (Vibrio fischeri), this protein is Sulfate adenylyltransferase subunit 2.